Consider the following 138-residue polypeptide: Brain natriuretic peptide (138 aa).

The signal sequence occupies residues 1–22 (MRLSSMWLCSLLLILKLQLSST). Disordered regions lie at residues 50–84 (EQMAVDQSAPGQRDLLDSLSTEDAGDGPQPDAGLD) and 99–138 (SVRNDSSRRSSGCFGRRMDRIGSMSSLGCNTVGRYNPKQR). C111 and C127 are joined by a disulfide.

This sequence belongs to the natriuretic peptide family.

Its subcellular location is the secreted. Functionally, cardiac hormone which may function as a paracrine antifibrotic factor in the heart. Also plays a key role in cardiovascular homeostasis through natriuresis, diuresis, vasorelaxation, and inhibition of renin and aldosterone secretion. This chain is Brain natriuretic peptide (nppb), found in Oreochromis mossambicus (Mozambique tilapia).